The primary structure comprises 79 residues: Acyl carrier protein (79 aa).

The 79-residue stretch at 1-79 (MTKEQILVDV…DVVSYIETQV (79 aa)) folds into the Carrier domain. Residue serine 39 is modified to O-(pantetheine 4'-phosphoryl)serine.

It belongs to the acyl carrier protein (ACP) family. In terms of processing, 4'-phosphopantetheine is transferred from CoA to a specific serine of apo-ACP by AcpS. This modification is essential for activity because fatty acids are bound in thioester linkage to the sulfhydryl of the prosthetic group.

The protein localises to the cytoplasm. Its pathway is lipid metabolism; fatty acid biosynthesis. Functionally, carrier of the growing fatty acid chain in fatty acid biosynthesis. In Exiguobacterium sibiricum (strain DSM 17290 / CCUG 55495 / CIP 109462 / JCM 13490 / 255-15), this protein is Acyl carrier protein.